Here is a 241-residue protein sequence, read N- to C-terminus: Host range factor p28 (241 aa).

A KilA-N domain is found at 21–131; the sequence is YIDEPNDIRL…QSILRGLVNW (111 aa). The segment at 172 to 225 adopts an RING-type zinc-finger fold; sequence CGICYEVVYSKRLENDRYFGLLDSCNHIFCITCINIWHRTRRETGASDNCPICR.

The protein belongs to the orthopoxvirus OPG021 family.

It localises to the host cytoplasm. The catalysed reaction is S-ubiquitinyl-[E2 ubiquitin-conjugating enzyme]-L-cysteine + [acceptor protein]-L-lysine = [E2 ubiquitin-conjugating enzyme]-L-cysteine + N(6)-ubiquitinyl-[acceptor protein]-L-lysine.. RING-finger E3 ubiquitin ligase which catalyzes the formation of both 'Lys-48'- and 'Lys-63'-linked polyubiquitin chains. Plays an important role in virulence by acting as an anti-apoptotic factor. The chain is Host range factor p28 (OPG021) from Ectromelia virus (strain Moscow) (ECTV).